A 511-amino-acid polypeptide reads, in one-letter code: MSQSKKTVALIIMDGWGHREDTTNNAIAHAKTPVLDRLTKETTNTLISASGMDVGLPGGQMGNSEVGHVNLGAGRVVYQDFTRVTKAIEDGDFFENEVLVSNVDKAIKQDKAVHIMGLLSPGGVHSHQDHIFAMIKLAAKRGAKKIFLHAFLDGRDTPPRSAKAPLEAADKVFEELGVGKTATLVGRYYAMDRDSRWDRVEKAYKVIAKGEGAFNVACAIEGLENSYSRDENDEFMQPTVIGDAAPIEDGDALVFMNFRADRAREISRPFVEKDFSDFEKGEHIDLSAFVMLTQYAESIDAPAAYPPVALVNVMGEWLANHGKTQLRISETEKFAHVTFFYSGGKEDLYEGEERILIPSPKVATYDLQPEMNSTELTDKLVEAIESGKFDAIICNYPNGDMVGHTGNFDAAVKACEAVDTCIGRVVEAIKKVGGDCLITADHGNAEKMADETTGQAHTAHTSELVPFWHVGQKTTARSGGTLSDVAPTMLHLMGMEQPAEMTGKPIVTLVK.

Residues Asp-14 and Ser-64 each coordinate Mn(2+). The active-site Phosphoserine intermediate is Ser-64. Substrate contacts are provided by residues His-125, Arg-155–Asp-156, Arg-187, Arg-193, Arg-259–Arg-262, and Lys-333. Mn(2+) is bound by residues Asp-400, His-404, Asp-441, His-442, and His-460.

Belongs to the BPG-independent phosphoglycerate mutase family. As to quaternary structure, monomer. The cofactor is Mn(2+).

The catalysed reaction is (2R)-2-phosphoglycerate = (2R)-3-phosphoglycerate. The protein operates within carbohydrate degradation; glycolysis; pyruvate from D-glyceraldehyde 3-phosphate: step 3/5. In terms of biological role, catalyzes the interconversion of 2-phosphoglycerate and 3-phosphoglycerate. This is 2,3-bisphosphoglycerate-independent phosphoglycerate mutase from Pseudoalteromonas atlantica (strain T6c / ATCC BAA-1087).